A 130-amino-acid chain; its full sequence is Small ribosomal subunit protein uS9 (130 aa).

This sequence belongs to the universal ribosomal protein uS9 family.

This is Small ribosomal subunit protein uS9 from Teredinibacter turnerae (strain ATCC 39867 / T7901).